The following is a 239-amino-acid chain: Ribonuclease 3 (239 aa).

The 126-residue stretch at 12–137 (RAKLEALIGH…LIAAIYLDGG (126 aa)) folds into the RNase III domain. Glu50 serves as a coordination point for Mg(2+). Asp54 is a catalytic residue. Residues Asp123 and Glu126 each coordinate Mg(2+). Glu126 is a catalytic residue. The DRBM domain maps to 162–231 (DAKTELQEWS…ATKMLEREGI (70 aa)).

Belongs to the ribonuclease III family. In terms of assembly, homodimer. It depends on Mg(2+) as a cofactor.

Its subcellular location is the cytoplasm. It carries out the reaction Endonucleolytic cleavage to 5'-phosphomonoester.. Its function is as follows. Digests double-stranded RNA. Involved in the processing of primary rRNA transcript to yield the immediate precursors to the large and small rRNAs (23S and 16S). Processes some mRNAs, and tRNAs when they are encoded in the rRNA operon. Processes pre-crRNA and tracrRNA of type II CRISPR loci if present in the organism. This Rhizobium etli (strain ATCC 51251 / DSM 11541 / JCM 21823 / NBRC 15573 / CFN 42) protein is Ribonuclease 3.